Consider the following 179-residue polypeptide: tRNA (cytidine(56)-2'-O)-methyltransferase (179 aa).

S-adenosyl-L-methionine-binding positions include Leu82, 112–116, and 130–137; these read GAEKV and VGNQPHSE.

The protein belongs to the aTrm56 family. In terms of assembly, homodimer.

It localises to the cytoplasm. The enzyme catalyses cytidine(56) in tRNA + S-adenosyl-L-methionine = 2'-O-methylcytidine(56) in tRNA + S-adenosyl-L-homocysteine + H(+). Functionally, specifically catalyzes the AdoMet-dependent 2'-O-ribose methylation of cytidine at position 56 in tRNAs. The protein is tRNA (cytidine(56)-2'-O)-methyltransferase of Methanococcus maripaludis (strain C7 / ATCC BAA-1331).